A 292-amino-acid polypeptide reads, in one-letter code: DSC E3 ubiquitin ligase complex subunit 3 (292 aa).

At 1 to 243 (MSAEPLLPTH…PIANIKHNKD (243 aa)) the chain is on the extracellular side. Residues Asn-11, Asn-41, Asn-77, Asn-99, and Asn-145 are each glycosylated (N-linked (GlcNAc...) asparagine). A helical transmembrane segment spans residues 244–264 (LLLGICVGFFFGVFGILLMKF). At 265–273 (DGLFNRRQK) the chain is on the cytoplasmic side. Residues 274–291 (MAIFAGVIVNVMFCLVRG) traverse the membrane as a helical segment. Phe-292 is a topological domain (extracellular).

Belongs to the dsc3 family. Component of the DSC E3 ligase complexes composed of at least TUL1, DSC2, DSC3, UBX3, CDC48 as well as VLD1 for the vacuole-localized complex or GLD1 for the Golgi/endosome-localized complex.

The protein localises to the endoplasmic reticulum membrane. Its function is as follows. Component of the DSC E3 ubiquitin ligase complexes that tag proteins present in Golgi, endosome and vacuole membranes and function in protein homeostasis under non-stress conditions and support a role in protein quality control. Involved in endocytic protein trafficking. This is DSC E3 ubiquitin ligase complex subunit 3 from Saccharomyces cerevisiae (strain ATCC 204508 / S288c) (Baker's yeast).